The sequence spans 103 residues: RVLKLPFILVQVPSPLDLSIRCNSSEAVLLKILLWNSPSFTSSITMYSLPLFTSIKTTLVSQNSYFNFFLGLAIKSCSLNFCLNSNNLGLSVINPFSLSTWVL.

Its subcellular location is the mitochondrion. This is an uncharacterized protein from Claviceps purpurea (Ergot fungus).